Here is a 78-residue protein sequence, read N- to C-terminus: Acyl carrier protein (78 aa).

The Carrier domain maps to 2 to 77 (DELFLRMRAL…DAYEFIKSKV (76 aa)). Serine 37 bears the O-(pantetheine 4'-phosphoryl)serine mark.

Belongs to the acyl carrier protein (ACP) family. Post-translationally, 4'-phosphopantetheine is transferred from CoA to a specific serine of apo-ACP by AcpS. This modification is essential for activity because fatty acids are bound in thioester linkage to the sulfhydryl of the prosthetic group.

The protein resides in the cytoplasm. Its pathway is lipid metabolism; fatty acid biosynthesis. Its function is as follows. Carrier of the growing fatty acid chain in fatty acid biosynthesis. The sequence is that of Acyl carrier protein from Treponema pallidum (strain Nichols).